The following is a 155-amino-acid chain: Small ribosomal subunit protein uS7 (155 aa).

Belongs to the universal ribosomal protein uS7 family. Part of the 30S ribosomal subunit. Contacts proteins S9 and S11.

In terms of biological role, one of the primary rRNA binding proteins, it binds directly to 16S rRNA where it nucleates assembly of the head domain of the 30S subunit. Is located at the subunit interface close to the decoding center, probably blocks exit of the E-site tRNA. The polypeptide is Small ribosomal subunit protein uS7 (Helicobacter pylori (strain Shi470)).